A 172-amino-acid polypeptide reads, in one-letter code: Adenine phosphoribosyltransferase (172 aa).

This sequence belongs to the purine/pyrimidine phosphoribosyltransferase family. In terms of assembly, homodimer.

Its subcellular location is the cytoplasm. The catalysed reaction is AMP + diphosphate = 5-phospho-alpha-D-ribose 1-diphosphate + adenine. Its pathway is purine metabolism; AMP biosynthesis via salvage pathway; AMP from adenine: step 1/1. Functionally, catalyzes a salvage reaction resulting in the formation of AMP, that is energically less costly than de novo synthesis. This is Adenine phosphoribosyltransferase from Streptococcus pyogenes serotype M5 (strain Manfredo).